The sequence spans 600 residues: Probable pectin methyltransferase QUA3 (600 aa).

The Cytoplasmic segment spans residues 1-18 (MGHVNLPASKRGNPRQWR). Residues 19–39 (LLDIVTAAFFGIVLLFFILLF) traverse the membrane as a helical; Signal-anchor for type II membrane protein segment. Over 40–600 (TPLGDSMAAS…SLWKLPSNSH (561 aa)) the chain is Lumenal. N283 carries N-linked (GlcNAc...) asparagine glycosylation.

This sequence belongs to the methyltransferase superfamily. Highly expressed and abundant in suspension-cultured cells, but low levels in seedlings.

The protein resides in the golgi apparatus membrane. The protein operates within glycan metabolism; pectin biosynthesis. Its function is as follows. S-adenosyl-L-methionine (SAM)-dependent methyltransferase (MTase) which mediates the methylesterification of the pectin homogalacturonan (HG) and thus regulates cell wall biosynthesis, at least in suspension-cultured cells. This is Probable pectin methyltransferase QUA3 from Arabidopsis thaliana (Mouse-ear cress).